The chain runs to 620 residues: Protein NRT1/ PTR FAMILY 2.13 (620 aa).

Residues 1–32 (MVLEDRKDGSSLPGRSGSFSKSSPSELDVVDP) are disordered. Residues 10–25 (SSLPGRSGSFSKSSPS) show a composition bias toward low complexity. Helical transmembrane passes span 70 to 90 (LGSI…FHLE), 95 to 115 (ANVI…GAYI), 126 to 146 (IAFA…TASF), 167 to 187 (KLQI…SGGI), 213 to 233 (FFNW…TVVV), 241 to 261 (WIIG…MFFA), 364 to 384 (IVPI…QGTF), 402 to 422 (IPAG…LPFY), 443 to 463 (LQRI…AGIV), 485 to 505 (VFWL…NIIG), 524 to 544 (SLFS…VTVV), and 568 to 588 (YFYY…WYCA).

It belongs to the major facilitator superfamily. Proton-dependent oligopeptide transporter (POT/PTR) (TC 2.A.17) family. As to quaternary structure, interacts with NLA. Post-translationally, ubiquitinated by NLA. Ubiquitination of NPF2.13 leads to its degradation by the proteasome. As to expression, expressed in leaves and flowers. Detected in stems and siliques. Highest expression in the distal lamina of older leaves. Restricted to the sieve element and companion cell complex of the minor vein.

The protein localises to the cell membrane. Low-affinity proton-dependent nitrate transporter. Not involved in dipeptides transport, but has a weak glucosinolate transport activity. Involved in phloem loading and nitrate remobilization from the older leaves to other tissues. The chain is Protein NRT1/ PTR FAMILY 2.13 (NPF2.13) from Arabidopsis thaliana (Mouse-ear cress).